The following is a 795-amino-acid chain: Protocadherin beta-4 (795 aa).

An N-terminal signal peptide occupies residues 1-27; sequence MKKLGRIHPNRQVLAFILMVFLSQVRL. Over 28-689 the chain is Extracellular; that stretch reads EPIRYSVLEE…AQADSLTVYL (662 aa). 5 Cadherin domains span residues 34–132, 137–241, 246–346, 351–450, and 455–560; these read VLEE…SPIF, VLLK…APEF, YGVQ…PPEL, LTSS…APAF, and YTLF…SPFV. N183 is a glycosylation site (N-linked (GlcNAc...) asparagine). N417 and N435 each carry an N-linked (GlcNAc...) asparagine glycan. N566 is a glycosylation site (N-linked (GlcNAc...) asparagine). The Cadherin 6 domain maps to 567–670; the sequence is GSAPCTELVP…LVDGFSQPYL (104 aa). A helical transmembrane segment spans residues 690–710; the sequence is VVALASVSSLFLFSVLLFVAV. Residues 711–795 lie on the Cytoplasmic side of the membrane; it reads RLCRRSRAAS…PKFRNSLVFS (85 aa).

The protein localises to the cell membrane. Functionally, potential calcium-dependent cell-adhesion protein. May be involved in the establishment and maintenance of specific neuronal connections in the brain. The protein is Protocadherin beta-4 (PCDHB4) of Homo sapiens (Human).